Consider the following 181-residue polypeptide: Methanesulfonate monooxygenase hydroxylase subunit beta (181 aa).

Belongs to the bacterial ring-hydroxylating dioxygenase beta subunit family. In terms of assembly, the MSA monooxygenase system consists of 4 proteins: the 2 subunits of the hydroxylase component (MsmA and MsmB), a ferredoxin (MsmC) and a ferredoxin reductase (MsmD). The hydroxylase component consists of a 3 alpha (MsmA) and 3 beta (MsmB) subunits.

It is found in the cytoplasm. The enzyme catalyses methanesulfonate + NADH + O2 = sulfite + formaldehyde + NAD(+) + H2O. With respect to regulation, MSAMO is inhibited by metal chelators (such as bathophenanthroline, bathocuprione, neocuprione, alpha-alpha-dipyridil and sodium EDTA) and by sodium azide, sodium arsenate and potassium cyanide. In terms of biological role, methanesulfonate monooxygenase (MSAMO) mediates the primary degradation of methanesulfonic acid (MSA) to produce formaldehyd and inorganic sulfite by initial hydroxylation of the carbon atom prior to spontaneous cleavage of the unstable hydroxymethanesulfonic acid. MSAMO has a restricted substrate range that includes only the short-chain aliphatic sulfonates (methane- to butanesulfonate) and excludes all larger molecules, such as arylsulfonates and aromatic sulfonates. All MSAMO components are required for enzyme activity. The sequence is that of Methanesulfonate monooxygenase hydroxylase subunit beta from Methylosulfonomonas methylovora.